The chain runs to 354 residues: MSKVQSITRESWILSTFPEWGSWLNEEIEQEQVAPGTFAMWWLGCTGIWLKSEGGTNVCVDFWCGTGKQSHGNPLMKTGHQMQRMAGVKKLQPNLRTTPFVLDPFAIRQIDAVLATHDHNDHIDVNVAAAVMQNCADNVPFIGPQTCVDLWVGWGVPKERCIVVKPGDVVKVKDIEIHALDAFDRTALITLPADQKAAGVLPDGMDVRAVNYLFKTPGGNLYHSGDSHYSNYYAKHGNEHQIDVALGSYGENPRGITDKMTSADILRMAESLNTKVVIPFHHDIWSNFQADPQEIRVLWEMKKDRLKYGFKPFIWQVGGKFTWPLDKDNFEYHYPRGFDDCFTIEPDLPFKSFL.

It belongs to the UlaG family. The cofactor is a divalent metal cation.

The protein resides in the cytoplasm. It carries out the reaction L-ascorbate 6-phosphate + H2O = 3-dehydro-L-gulonate 6-phosphate. Its pathway is cofactor degradation; L-ascorbate degradation; D-xylulose 5-phosphate from L-ascorbate: step 1/4. Its function is as follows. Probably catalyzes the hydrolysis of L-ascorbate-6-P into 3-keto-L-gulonate-6-P. Is essential for L-ascorbate utilization under anaerobic conditions. The polypeptide is Probable L-ascorbate-6-phosphate lactonase UlaG (Salmonella heidelberg (strain SL476)).